The sequence spans 147 residues: Low molecular weight protein-tyrosine-phosphatase Wzb (147 aa).

Cys9 acts as the Nucleophile in catalysis. Arg15 is an active-site residue. Catalysis depends on Asp115, which acts as the Proton donor.

The protein belongs to the low molecular weight phosphotyrosine protein phosphatase family.

It carries out the reaction O-phospho-L-tyrosyl-[protein] + H2O = L-tyrosyl-[protein] + phosphate. The protein operates within glycan metabolism; exopolysaccharide biosynthesis. In terms of biological role, dephosphorylates Wzc. Required for the extracellular polysaccharide colanic acid synthesis. Probably involved in the export of colanic acid from the cell to medium. Involved in protection of cells against contact-dependent growth inhibition (CDI). This chain is Low molecular weight protein-tyrosine-phosphatase Wzb (wzb), found in Escherichia coli O157:H7.